We begin with the raw amino-acid sequence, 167 residues long: SsrA-binding protein (167 aa).

The tract at residues 139 to 167 (QAHDKRHAEKEREWQRDKQRIMRAHNRNA) is disordered. Residues 144 to 158 (RHAEKEREWQRDKQR) are compositionally biased toward basic and acidic residues.

This sequence belongs to the SmpB family.

It is found in the cytoplasm. Functionally, required for rescue of stalled ribosomes mediated by trans-translation. Binds to transfer-messenger RNA (tmRNA), required for stable association of tmRNA with ribosomes. tmRNA and SmpB together mimic tRNA shape, replacing the anticodon stem-loop with SmpB. tmRNA is encoded by the ssrA gene; the 2 termini fold to resemble tRNA(Ala) and it encodes a 'tag peptide', a short internal open reading frame. During trans-translation Ala-aminoacylated tmRNA acts like a tRNA, entering the A-site of stalled ribosomes, displacing the stalled mRNA. The ribosome then switches to translate the ORF on the tmRNA; the nascent peptide is terminated with the 'tag peptide' encoded by the tmRNA and targeted for degradation. The ribosome is freed to recommence translation, which seems to be the essential function of trans-translation. This chain is SsrA-binding protein, found in Xylella fastidiosa (strain 9a5c).